The chain runs to 403 residues: Octaketide synthase 1 (403 aa).

Cysteine 174 is a catalytic residue. CoA is bound by residues serine 281 and 318 to 321 (GGRA).

Belongs to the thiolase-like superfamily. Chalcone/stilbene synthases family. In terms of assembly, homodimer.

Its pathway is secondary metabolite biosynthesis; flavonoid biosynthesis. Functionally, catalyzes the iterative condensations of 8 molecules of malonyl-CoA to produce aromatic octaketides, SEK4 and SEK4b, the products of the minimal polyketide synthase for the benzoisochromanequinone actinorhodin. May be involved in the biosynthesis of the octaketide barbaloin. The chain is Octaketide synthase 1 from Aloe arborescens (Kidachi aloe).